The following is an 83-amino-acid chain: RNA-binding protein Hfq (83 aa).

The 61-residue stretch at 10–70 (DTFLNQVRKE…ISTVMPLRPI (61 aa)) folds into the Sm domain.

The protein belongs to the Hfq family. As to quaternary structure, homohexamer.

Its function is as follows. RNA chaperone that binds small regulatory RNA (sRNAs) and mRNAs to facilitate mRNA translational regulation in response to envelope stress, environmental stress and changes in metabolite concentrations. Also binds with high specificity to tRNAs. This Desulfitobacterium hafniense (strain Y51) protein is RNA-binding protein Hfq.